We begin with the raw amino-acid sequence, 35 residues long: Photosystem II reaction center protein M (35 aa).

Residues glycine 7 to isoleucine 27 traverse the membrane as a helical segment.

Belongs to the PsbM family. In terms of assembly, PSII is composed of 1 copy each of membrane proteins PsbA, PsbB, PsbC, PsbD, PsbE, PsbF, PsbH, PsbI, PsbJ, PsbK, PsbL, PsbM, PsbT, PsbX, PsbY, PsbZ, Psb30/Ycf12, peripheral proteins PsbO, CyanoQ (PsbQ), PsbU, PsbV and a large number of cofactors. It forms dimeric complexes.

The protein localises to the cellular thylakoid membrane. One of the components of the core complex of photosystem II (PSII). PSII is a light-driven water:plastoquinone oxidoreductase that uses light energy to abstract electrons from H(2)O, generating O(2) and a proton gradient subsequently used for ATP formation. It consists of a core antenna complex that captures photons, and an electron transfer chain that converts photonic excitation into a charge separation. This subunit is found at the monomer-monomer interface. The sequence is that of Photosystem II reaction center protein M from Synechococcus elongatus (strain ATCC 33912 / PCC 7942 / FACHB-805) (Anacystis nidulans R2).